We begin with the raw amino-acid sequence, 433 residues long: Serine--tRNA ligase (433 aa).

L-serine is bound at residue 235-237; that stretch reads TSE. 266–268 is a binding site for ATP; it reads RSE. Glu-289 lines the L-serine pocket. 353 to 356 is a binding site for ATP; it reads EISS. Ser-388 is an L-serine binding site.

It belongs to the class-II aminoacyl-tRNA synthetase family. Type-1 seryl-tRNA synthetase subfamily. Homodimer. The tRNA molecule binds across the dimer.

It is found in the cytoplasm. The enzyme catalyses tRNA(Ser) + L-serine + ATP = L-seryl-tRNA(Ser) + AMP + diphosphate + H(+). It catalyses the reaction tRNA(Sec) + L-serine + ATP = L-seryl-tRNA(Sec) + AMP + diphosphate + H(+). It functions in the pathway aminoacyl-tRNA biosynthesis; selenocysteinyl-tRNA(Sec) biosynthesis; L-seryl-tRNA(Sec) from L-serine and tRNA(Sec): step 1/1. Its function is as follows. Catalyzes the attachment of serine to tRNA(Ser). Is also able to aminoacylate tRNA(Sec) with serine, to form the misacylated tRNA L-seryl-tRNA(Sec), which will be further converted into selenocysteinyl-tRNA(Sec). The protein is Serine--tRNA ligase of Burkholderia cepacia (Pseudomonas cepacia).